Consider the following 407-residue polypeptide: 12S rRNA N(4)-cytidine methyltransferase METTL15 (407 aa).

Residues 44 to 63 (EAQEETDQTGIQELHRSQDR) form a disordered region. Residues 100 to 102 (GGH), Asp-119, Phe-146, Asp-169, and Gln-176 each bind S-adenosyl-L-methionine. Phosphoserine is present on Ser-358. The tract at residues 386–407 (EDEDVQDNPRGRSAKLRAAIKL) is disordered. Residues 397 to 407 (RSAKLRAAIKL) are compositionally biased toward basic residues.

This sequence belongs to the methyltransferase superfamily. RsmH family.

The protein resides in the mitochondrion matrix. It carries out the reaction cytidine(839) in 12S rRNA + S-adenosyl-L-methionine = N(4)-methylcytidine(839) in 12S rRNA + S-adenosyl-L-homocysteine + H(+). In terms of biological role, N4-methylcytidine (m4C) methyltransferase responsible for the methylation of position C839 in mitochondrial 12S rRNA. Involved in the stabilization of 12S rRNA folding, therefore facilitating the assembly of the mitochondrial small ribosomal subunits. The chain is 12S rRNA N(4)-cytidine methyltransferase METTL15 (METTL15) from Bos taurus (Bovine).